We begin with the raw amino-acid sequence, 251 residues long: DNA repair protein RecO (251 aa).

Belongs to the RecO family.

Involved in DNA repair and RecF pathway recombination. The polypeptide is DNA repair protein RecO (Nitratidesulfovibrio vulgaris (strain ATCC 29579 / DSM 644 / CCUG 34227 / NCIMB 8303 / VKM B-1760 / Hildenborough) (Desulfovibrio vulgaris)).